We begin with the raw amino-acid sequence, 114 residues long: Probable non-functional T cell receptor beta variable 5-3 (114 aa).

Residues Met-1–Ala-21 form the signal peptide. An Ig-like domain is found at Gly-22–Leu-114. The cysteines at positions 42 and 110 are disulfide-linked. Asn-96 carries an N-linked (GlcNAc...) asparagine glycan.

As to quaternary structure, alpha-beta TR is a heterodimer composed of an alpha and beta chain; disulfide-linked. The alpha-beta TR is associated with the transmembrane signaling CD3 coreceptor proteins to form the TR-CD3 (TcR or TCR). The assembly of alpha-beta TR heterodimers with CD3 occurs in the endoplasmic reticulum where a single alpha-beta TR heterodimer associates with one CD3D-CD3E heterodimer, one CD3G-CD3E heterodimer and one CD247 homodimer forming a stable octameric structure. CD3D-CD3E and CD3G-CD3E heterodimers preferentially associate with TR alpha and TR beta chains, respectively. The association of the CD247 homodimer is the last step of TcR assembly in the endoplasmic reticulum and is required for transport to the cell surface.

Its subcellular location is the cell membrane. Functionally, probable non-functional open reading frame (ORF) of V region of the variable domain of T cell receptor (TR) beta chain. Non-functional ORF generally cannot participate in the synthesis of a productive T cell receptor (TR) chain due to altered V-(D)-J or switch recombination and/or splicing site (at mRNA level) and/or conserved amino acid change (protein level). Alpha-beta T cell receptors are antigen specific receptors which are essential to the immune response and are present on the cell surface of T lymphocytes. Recognize peptide-major histocompatibility (MH) (pMH) complexes that are displayed by antigen presenting cells (APC), a prerequisite for efficient T cell adaptive immunity against pathogens. Binding of alpha-beta TR to pMH complex initiates TR-CD3 clustering on the cell surface and intracellular activation of LCK that phosphorylates the ITAM motifs of CD3G, CD3D, CD3E and CD247 enabling the recruitment of ZAP70. In turn ZAP70 phosphorylates LAT, which recruits numerous signaling molecules to form the LAT signalosome. The LAT signalosome propagates signal branching to three major signaling pathways, the calcium, the mitogen-activated protein kinase (MAPK) kinase and the nuclear factor NF-kappa-B (NF-kB) pathways, leading to the mobilization of transcription factors that are critical for gene expression and essential for T cell growth and differentiation. The T cell repertoire is generated in the thymus, by V-(D)-J rearrangement. This repertoire is then shaped by intrathymic selection events to generate a peripheral T cell pool of self-MH restricted, non-autoaggressive T cells. Post-thymic interaction of alpha-beta TR with the pMH complexes shapes TR structural and functional avidity. The chain is Probable non-functional T cell receptor beta variable 5-3 from Homo sapiens (Human).